The sequence spans 260 residues: MVLIRVLANLLILQLSYAQKSSELVIGGDECNINEHRFLVALYDPDRFLCSGILLNEEWVLTAAHCDRRNIRIKLGMHSKTVPNEDEQTRVPKEKFFCLSSKNYTLWDKDIMLIRLDSPVSNSEHIAPLSLPSSPPSVGSVCRIMGWGRISPSKETYPDVPHCANINLLDYEVCLAAYPEFGLPATSKTLCAGILEGGKDTCVGDSGGPLICNGQFQGILSWGNDVCGYILQPALYTRVFDHLDWIQSIIAGNTDVTCPP.

The first 18 residues, 1–18 (MVLIRVLANLLILQLSYA), serve as a signal peptide directing secretion. A propeptide spanning residues 19–24 (QKSSEL) is cleaved from the precursor. The Peptidase S1 domain maps to 25-251 (VIGGDECNIN…HLDWIQSIIA (227 aa)). Disulfide bonds link Cys-31-Cys-163, Cys-50-Cys-66, Cys-98-Cys-258, Cys-142-Cys-212, Cys-174-Cys-191, and Cys-202-Cys-227. Residue His-65 is the Charge relay system of the active site. Asn-103 is a glycosylation site (N-linked (GlcNAc...) asparagine). Residue Asp-110 is the Charge relay system of the active site. Ser-206 serves as the catalytic Charge relay system.

The protein belongs to the peptidase S1 family. Snake venom subfamily. Monomer. As to expression, expressed by the venom gland.

The protein localises to the secreted. Snake venom serine protease that may act in the hemostasis system of the prey. The sequence is that of Snake venom serine proteinase 12 from Crotalus adamanteus (Eastern diamondback rattlesnake).